Reading from the N-terminus, the 244-residue chain is tRNA (guanine-N(1)-)-methyltransferase (244 aa).

Residues glycine 120 and 140–145 (IGDYIL) each bind S-adenosyl-L-methionine.

It belongs to the RNA methyltransferase TrmD family. In terms of assembly, homodimer.

The protein resides in the cytoplasm. It carries out the reaction guanosine(37) in tRNA + S-adenosyl-L-methionine = N(1)-methylguanosine(37) in tRNA + S-adenosyl-L-homocysteine + H(+). Its function is as follows. Specifically methylates guanosine-37 in various tRNAs. This is tRNA (guanine-N(1)-)-methyltransferase from Brucella abortus (strain S19).